The following is a 63-amino-acid chain: High-potential iron-sulfur protein (63 aa).

Positions 23, 26, 41, and 56 each coordinate [4Fe-4S] cluster.

This sequence belongs to the high-potential iron-sulfur protein (HiPIP) family. In terms of assembly, homodimer.

Specific class of high-redox-potential 4Fe-4S ferredoxins. Functions in anaerobic electron transport in most purple and in some other photosynthetic bacteria and in at least one genus (Paracoccus) of halophilic, denitrifying bacteria. The sequence is that of High-potential iron-sulfur protein (hip) from Rhodocyclus tenuis (Rhodospirillum tenue).